A 395-amino-acid chain; its full sequence is Xylose isomerase (395 aa).

Catalysis depends on residues His54 and Asp57. Mg(2+)-binding residues include Glu181, Glu217, His220, Asp245, Asp255, Asp257, and Asp293.

This sequence belongs to the xylose isomerase family. In terms of assembly, homotetramer. The cofactor is Mg(2+).

The protein resides in the cytoplasm. It carries out the reaction alpha-D-xylose = alpha-D-xylulofuranose. This chain is Xylose isomerase (xylA), found in Arthrobacter sp. (strain NRRL B3728).